The sequence spans 588 residues: Cryptochrome-1 (588 aa).

The Photolyase/cryptochrome alpha/beta domain occupies 3 to 132 (VNAVHWFRKG…EVIVRISHTL (130 aa)). Residue lysine 11 forms a Glycyl lysine isopeptide (Lys-Gly) (interchain with G-Cter in ubiquitin) linkage. The LIR 1 signature appears at 50–54 (NRWRF). A Phosphoserine; by AMPK modification is found at serine 71. Positions 82–87 (DVFPRL) match the LIR 2 motif. Lysine 107 participates in a covalent cross-link: Glycyl lysine isopeptide (Lys-Gly) (interchain with G-Cter in ubiquitin). The LIR 3 signature appears at 151 to 156 (KRFQTL). Lysine 159 participates in a covalent cross-link: Glycyl lysine isopeptide (Lys-Gly) (interchain with G-Cter in ubiquitin). At serine 247 the chain carries Phosphoserine; by MAPK. An FAD-binding site is contributed by serine 252. Short sequence motifs (LIR) lie at residues 255–260 (LRFGCL) and 271–276 (DLYKKV). At serine 280 the chain carries Phosphoserine; by AMPK. Residues 285–290 (SLYGQL) carry the LIR 6 motif. Glutamine 289 is an FAD binding site. Lysine 329 is covalently cross-linked (Glycyl lysine isopeptide (Lys-Gly) (interchain with G-Cter in ubiquitin)). Positions 335–339 (TGFPW) match the LIR 7 motif. Histidine 355 provides a ligand contact to FAD. The tract at residues 371–470 (WISWEEGMKV…LIGVNYPKPM (100 aa)) is required for inhibition of CLOCK-BMAL1-mediated transcription. An LIR 8 motif is present at residues 379-384 (KVFEEL). Residue 387-389 (DAD) coordinates FAD. 3 short sequence motifs (LIR) span residues 395–400 (GSWMWL), 411–416 (HCYCPV), and 430–435 (RRYLPV). Positions 471 to 493 (VNHAEASRLNIERMKQIYQQLSR) are interaction with TIMELESS. Residue lysine 485 forms a Glycyl lysine isopeptide (Lys-Gly) (interchain with G-Cter in ubiquitin) linkage. Short sequence motifs (LIR) lie at residues 486 to 491 (QIYQQL) and 492 to 497 (SRYRGL). The interval 511 to 588 (GGLMGYAPGE…GPKVQRQSSN (78 aa)) is disordered. Residues 545-568 (DSQQTNPLKQGRSSMGTGLSSGKR) show a composition bias toward polar residues. Lysine 567 is covalently cross-linked (Glycyl lysine isopeptide (Lys-Gly) (interchain with G-Cter in ubiquitin)). Serine 570 is modified (phosphoserine).

This sequence belongs to the DNA photolyase class-1 family. Component of the circadian core oscillator, which includes the CRY proteins, CLOCK or NPAS2, BMAL1 or BMAL2, CSNK1D and/or CSNK1E, TIMELESS, and the PER proteins. Interacts directly with TIMELESS. Interacts directly with PER1, PER2 and PER3; interaction with PER2 inhibits its ubiquitination and vice versa. Interacts with FBXL21. Interacts with FBXL3. Interacts with CLOCK-BMAL1 independently of PER2 and DNA. Interacts with HDAC1, HDAC2 and SIN3B. Interacts with nuclear receptors AR, NR1D1, NR3C1/GR, RORA and RORC; the interaction with at least NR3C1/GR is ligand dependent. Interacts with PRKDC. Interacts with the G protein subunit alpha GNAS; the interaction may block GPCR-mediated regulation of cAMP concentrations. Interacts with PRMT5. Interacts with EZH2. Interacts with MYBBP1A, DOCK7, HNRNPU, RPL7A, RPL8 and RPS3. Interacts with PPP5C (via TPR repeats). Interacts with MAP1LC3B. Interacts with CLOCK. Interacts with BMAL1. Interacts weakly with HDAC3; this interaction is enhanced in the presence of FBXL3. Interacts with TRIM28, KCTD5 and DDB1. Interacts with FOXO1. Interacts with DTL and DDB1-CUL4A complex. Interacts with HNF4A. Interacts with PSMD2 in a KDM8-dependent manner. Interacts with KDM8 in a FBXL3-dependent manner. Interacts with PPARG in a ligand-dependent manner. Interacts with PPARD (via domain NR LBD) and NR1I2 (via domain NR LBD) in a ligand-dependent manner. Interacts with PPARA, NR1I3 and VDR. It depends on FAD as a cofactor. The cofactor is (6R)-5,10-methylene-5,6,7,8-tetrahydrofolate. Post-translationally, phosphorylation on Ser-247 by MAPK is important for the inhibition of CLOCK-BMAL1-mediated transcriptional activity. Phosphorylation by CSNK1E requires interaction with PER1 or PER2. Phosphorylation at Ser-71 and Ser-280 by AMPK decreases protein stability. Phosphorylation at Ser-570 exhibits a robust circadian rhythm with a peak at CT8, increases protein stability, prevents SCF(FBXL3)-mediated degradation and is antagonized by interaction with PRKDC. In terms of processing, ubiquitinated by the SCF(FBXL3) and SCF(FBXL21) complexes, regulating the balance between degradation and stabilization. The SCF(FBXL3) complex is mainly nuclear and mediates ubiquitination and subsequent degradation of CRY1. In contrast, cytoplasmic SCF(FBXL21) complex-mediated ubiquitination leads to stabilize CRY1 and counteract the activity of the SCF(FBXL3) complex. The SCF(FBXL3) and SCF(FBXL21) complexes probably mediate ubiquitination at different Lys residues. Ubiquitination at Lys-11 and Lys-107 are specifically ubiquitinated by the SCF(FBXL21) complex but not by the SCF(FBXL3) complex. Ubiquitination may be inhibited by PER2. Deubiquitinated by USP7. Undergoes autophagy-mediated degradation in the liver in a time-dependent manner. Autophagic degradation of CRY1 (an inhibitor of gluconeogenesis) occurs during periods of reduced feeding allowing induction of gluconeogenesis and maintenance of blood glucose levels.

The protein resides in the cytoplasm. The protein localises to the nucleus. Its function is as follows. Transcriptional repressor which forms a core component of the circadian clock. The circadian clock, an internal time-keeping system, regulates various physiological processes through the generation of approximately 24 hour circadian rhythms in gene expression, which are translated into rhythms in metabolism and behavior. It is derived from the Latin roots 'circa' (about) and 'diem' (day) and acts as an important regulator of a wide array of physiological functions including metabolism, sleep, body temperature, blood pressure, endocrine, immune, cardiovascular, and renal function. Consists of two major components: the central clock, residing in the suprachiasmatic nucleus (SCN) of the brain, and the peripheral clocks that are present in nearly every tissue and organ system. Both the central and peripheral clocks can be reset by environmental cues, also known as Zeitgebers (German for 'timegivers'). The predominant Zeitgeber for the central clock is light, which is sensed by retina and signals directly to the SCN. The central clock entrains the peripheral clocks through neuronal and hormonal signals, body temperature and feeding-related cues, aligning all clocks with the external light/dark cycle. Circadian rhythms allow an organism to achieve temporal homeostasis with its environment at the molecular level by regulating gene expression to create a peak of protein expression once every 24 hours to control when a particular physiological process is most active with respect to the solar day. Transcription and translation of core clock components (CLOCK, NPAS2, BMAL1, BMAL2, PER1, PER2, PER3, CRY1 and CRY2) plays a critical role in rhythm generation, whereas delays imposed by post-translational modifications (PTMs) are important for determining the period (tau) of the rhythms (tau refers to the period of a rhythm and is the length, in time, of one complete cycle). A diurnal rhythm is synchronized with the day/night cycle, while the ultradian and infradian rhythms have a period shorter and longer than 24 hours, respectively. Disruptions in the circadian rhythms contribute to the pathology of cardiovascular diseases, cancer, metabolic syndromes and aging. A transcription/translation feedback loop (TTFL) forms the core of the molecular circadian clock mechanism. Transcription factors, CLOCK or NPAS2 and BMAL1 or BMAL2, form the positive limb of the feedback loop, act in the form of a heterodimer and activate the transcription of core clock genes and clock-controlled genes (involved in key metabolic processes), harboring E-box elements (5'-CACGTG-3') within their promoters. The core clock genes: PER1/2/3 and CRY1/2 which are transcriptional repressors form the negative limb of the feedback loop and interact with the CLOCK|NPAS2-BMAL1|BMAL2 heterodimer inhibiting its activity and thereby negatively regulating their own expression. This heterodimer also activates nuclear receptors NR1D1/2 and RORA/B/G, which form a second feedback loop and which activate and repress BMAL1 transcription, respectively. CRY1 and CRY2 have redundant functions but also differential and selective contributions at least in defining the pace of the SCN circadian clock and its circadian transcriptional outputs. More potent transcriptional repressor in cerebellum and liver than CRY2, though more effective in lengthening the period of the SCN oscillator. On its side, CRY2 seems to play a critical role in tuning SCN circadian period by opposing the action of CRY1. With CRY2, is dispensable for circadian rhythm generation but necessary for the development of intercellular networks for rhythm synchrony. Capable of translocating circadian clock core proteins such as PER proteins to the nucleus. Interacts with CLOCK-BMAL1 independently of PER proteins and is found at CLOCK-BMAL1-bound sites, suggesting that CRY may act as a molecular gatekeeper to maintain CLOCK-BMAL1 in a poised and repressed state until the proper time for transcriptional activation. Represses the CLOCK-BMAL1 induced transcription of BHLHE40/DEC1, ATF4, MTA1, KLF10 and NAMPT. May repress circadian target genes expression in collaboration with HDAC1 and HDAC2 through histone deacetylation. Mediates the clock-control activation of ATR and modulates ATR-mediated DNA damage checkpoint. In liver, mediates circadian regulation of cAMP signaling and gluconeogenesis by binding to membrane-coupled G proteins and blocking glucagon-mediated increases in intracellular cAMP concentrations and CREB1 phosphorylation. Inhibits hepatic gluconeogenesis by decreasing nuclear FOXO1 levels that down-regulates gluconeogenic gene expression. Besides its role in the maintenance of the circadian clock, is also involved in the regulation of other processes. Represses glucocorticoid receptor NR3C1/GR-induced transcriptional activity by binding to glucocorticoid response elements (GREs). Plays a key role in glucose and lipid metabolism modulation, in part, through the transcriptional regulation of genes involved in these pathways, such as LEP or ACSL4. Represses PPARD and its target genes in the skeletal muscle and limits exercise capacity. Plays an essential role in the generation of circadian rhythms in the retina. Represses the transcriptional activity of NR1I2. The protein is Cryptochrome-1 (Cry1) of Rattus norvegicus (Rat).